Reading from the N-terminus, the 126-residue chain is Protein ApaG (126 aa).

Positions 2–126 (SDPRYQIDVS…FRLAVPGALH (125 aa)) constitute an ApaG domain.

The chain is Protein ApaG from Pseudomonas entomophila (strain L48).